We begin with the raw amino-acid sequence, 290 residues long: Isopentenyl-diphosphate Delta-isomerase II (290 aa).

The region spanning 108 to 260 (MLHRAFTVFL…GLKLSPWFRL (153 aa)) is the Nudix hydrolase domain. Catalysis depends on residues Cys-145 and Glu-207.

The protein belongs to the IPP isomerase type 1 family.

The enzyme catalyses isopentenyl diphosphate = dimethylallyl diphosphate. It participates in isoprenoid biosynthesis; dimethylallyl diphosphate biosynthesis; dimethylallyl diphosphate from isopentenyl diphosphate: step 1/1. It functions in the pathway porphyrin-containing compound metabolism; chlorophyll biosynthesis. In terms of biological role, catalyzes the 1,3-allylic rearrangement of the homoallylic substrate isopentenyl (IPP) to its highly electrophilic allylic isomer, dimethylallyl diphosphate (DMAPP). This chain is Isopentenyl-diphosphate Delta-isomerase II (IPI2), found in Clarkia xantiana (Gunsight clarkia).